A 66-amino-acid polypeptide reads, in one-letter code: Photosystem II reaction center protein H (66 aa).

A helical membrane pass occupies residues 29-49 (PIMGLTMVLFLVFLLIILQIY).

Belongs to the PsbH family. As to quaternary structure, PSII is composed of 1 copy each of membrane proteins PsbA, PsbB, PsbC, PsbD, PsbE, PsbF, PsbH, PsbI, PsbJ, PsbK, PsbL, PsbM, PsbT, PsbX, PsbY, PsbZ, Psb30/Ycf12, at least 3 peripheral proteins of the oxygen-evolving complex and a large number of cofactors. It forms dimeric complexes.

It is found in the plastid. The protein resides in the chloroplast thylakoid membrane. Its function is as follows. One of the components of the core complex of photosystem II (PSII), required for its stability and/or assembly. PSII is a light-driven water:plastoquinone oxidoreductase that uses light energy to abstract electrons from H(2)O, generating O(2) and a proton gradient subsequently used for ATP formation. It consists of a core antenna complex that captures photons, and an electron transfer chain that converts photonic excitation into a charge separation. In Thalassiosira pseudonana (Marine diatom), this protein is Photosystem II reaction center protein H.